Here is a 502-residue protein sequence, read N- to C-terminus: Lipoprotein LipO (502 aa).

The N-terminal stretch at 1–21 (MKIRMRKKWMALPLAAMMIAG) is a signal peptide. Cys-22 is lipidated: N-palmitoyl cysteine. Cys-22 is lipidated: S-diacylglycerol cysteine.

It is found in the cell membrane. In Bacillus subtilis (strain 168), this protein is Lipoprotein LipO (lipO).